The chain runs to 124 residues: Small ribosomal subunit protein uS13 (124 aa).

The segment at 95 to 124 is disordered; the sequence is GLPVRGQRTHTNARTRKGPRRSVMGKRKKA.

Belongs to the universal ribosomal protein uS13 family. As to quaternary structure, part of the 30S ribosomal subunit. Forms a loose heterodimer with protein S19. Forms two bridges to the 50S subunit in the 70S ribosome.

Its function is as follows. Located at the top of the head of the 30S subunit, it contacts several helices of the 16S rRNA. In the 70S ribosome it contacts the 23S rRNA (bridge B1a) and protein L5 of the 50S subunit (bridge B1b), connecting the 2 subunits; these bridges are implicated in subunit movement. Contacts the tRNAs in the A and P-sites. This Syntrophobacter fumaroxidans (strain DSM 10017 / MPOB) protein is Small ribosomal subunit protein uS13.